A 313-amino-acid chain; its full sequence is MATRKLKAAIIGSGNIGTDLMIKILRHGKHLEMGAMVGIDPASDGLARAARMGVATTHEGVEGLISLPNFADIDVVFDATSAGAHVKNDARLREVKPGIRMIDLTPAAIGPYCVPVVNLDDRLDALNVNMVTCGGQATIPMVAAVSRVAKVHYAEIVASISSKSAGPGTRANIDEFTETTSKAIEVIGGAAKGKAIIVLNPAEPPLIMRDTVYVLSAAANRAEVEASIEEMAAAVQQYVPGYRLKQKVQFDEIPASAPLNIPGLGKFSGLKTSVFLEVEGAAHYLPAYAGNLDIMTSAALATAERMAQAALTA.

13-16 serves as a coordination point for NAD(+); sequence SGNI. Catalysis depends on C133, which acts as the Acyl-thioester intermediate. Residues 164–172 and N291 contribute to the NAD(+) site; that span reads SAGPGTRAN.

The protein belongs to the acetaldehyde dehydrogenase family.

It catalyses the reaction acetaldehyde + NAD(+) + CoA = acetyl-CoA + NADH + H(+). The protein is Acetaldehyde dehydrogenase of Cupriavidus pinatubonensis (strain JMP 134 / LMG 1197) (Cupriavidus necator (strain JMP 134)).